The following is a 230-amino-acid chain: UPF0173 metal-dependent hydrolase LI0883 (230 aa).

This sequence belongs to the UPF0173 family.

In Lawsonia intracellularis (strain PHE/MN1-00), this protein is UPF0173 metal-dependent hydrolase LI0883.